The sequence spans 421 residues: Serine hydroxymethyltransferase (421 aa).

Residues Leu118 and 122 to 124 (GHL) contribute to the (6S)-5,6,7,8-tetrahydrofolate site. Lys226 is subject to N6-(pyridoxal phosphate)lysine. A (6S)-5,6,7,8-tetrahydrofolate-binding site is contributed by Glu242.

It belongs to the SHMT family. Homodimer. Pyridoxal 5'-phosphate serves as cofactor.

Its subcellular location is the cytoplasm. The enzyme catalyses (6R)-5,10-methylene-5,6,7,8-tetrahydrofolate + glycine + H2O = (6S)-5,6,7,8-tetrahydrofolate + L-serine. It functions in the pathway one-carbon metabolism; tetrahydrofolate interconversion. It participates in amino-acid biosynthesis; glycine biosynthesis; glycine from L-serine: step 1/1. In terms of biological role, catalyzes the reversible interconversion of serine and glycine with tetrahydrofolate (THF) serving as the one-carbon carrier. This reaction serves as the major source of one-carbon groups required for the biosynthesis of purines, thymidylate, methionine, and other important biomolecules. Also exhibits THF-independent aldolase activity toward beta-hydroxyamino acids, producing glycine and aldehydes, via a retro-aldol mechanism. This chain is Serine hydroxymethyltransferase, found in Mycoplasmopsis synoviae (strain 53) (Mycoplasma synoviae).